The chain runs to 245 residues: Probable phosphatase YcdX (245 aa).

Zn(2+) contacts are provided by H7, H9, H15, H40, E73, H101, H131, D192, and H194.

This sequence belongs to the PHP family. Homotrimer. It depends on Zn(2+) as a cofactor.

The protein is Probable phosphatase YcdX of Shigella dysenteriae serotype 1 (strain Sd197).